A 102-amino-acid chain; its full sequence is Aspartyl/glutamyl-tRNA(Asn/Gln) amidotransferase subunit C (102 aa).

Belongs to the GatC family. In terms of assembly, heterotrimer of A, B and C subunits.

It catalyses the reaction L-glutamyl-tRNA(Gln) + L-glutamine + ATP + H2O = L-glutaminyl-tRNA(Gln) + L-glutamate + ADP + phosphate + H(+). It carries out the reaction L-aspartyl-tRNA(Asn) + L-glutamine + ATP + H2O = L-asparaginyl-tRNA(Asn) + L-glutamate + ADP + phosphate + 2 H(+). Allows the formation of correctly charged Asn-tRNA(Asn) or Gln-tRNA(Gln) through the transamidation of misacylated Asp-tRNA(Asn) or Glu-tRNA(Gln) in organisms which lack either or both of asparaginyl-tRNA or glutaminyl-tRNA synthetases. The reaction takes place in the presence of glutamine and ATP through an activated phospho-Asp-tRNA(Asn) or phospho-Glu-tRNA(Gln). The protein is Aspartyl/glutamyl-tRNA(Asn/Gln) amidotransferase subunit C of Bordetella bronchiseptica (strain ATCC BAA-588 / NCTC 13252 / RB50) (Alcaligenes bronchisepticus).